The sequence spans 268 residues: MRLIPLKTAQQVSKWAAKHIVDRINTFAPTAERPFVLGLPTGGTPLQTYKELIKLYQAEEVSFKYVVTFNMDEYVGLPKEHPESYHSFMYNNFFNHIDIQPQNINILDGNTDDHDEECRRYEEKIKSYGKINLFMGGVGVDGHIAFNEPASSLASRTRIKTLTEDTLIANSRFFDNDVTKVPKYALTIGVATLLDAEEVMLLVTGHNKALALQAGVEGNVNHFWTISALQLHRHAIFVCDEPATQELKVKTVKYFTELEQRAIHSVLD.

D72 serves as the catalytic Proton acceptor; for enolization step. Residue D141 is the For ring-opening step of the active site. H143 acts as the Proton acceptor; for ring-opening step in catalysis. The For ring-opening step role is filled by E148.

Belongs to the glucosamine/galactosamine-6-phosphate isomerase family. NagB subfamily. As to quaternary structure, homohexamer.

It carries out the reaction alpha-D-glucosamine 6-phosphate + H2O = beta-D-fructose 6-phosphate + NH4(+). The protein operates within amino-sugar metabolism; N-acetylneuraminate degradation; D-fructose 6-phosphate from N-acetylneuraminate: step 5/5. Its activity is regulated as follows. Allosterically activated by N-acetylglucosamine 6-phosphate (GlcNAc6P). Catalyzes the reversible isomerization-deamination of glucosamine 6-phosphate (GlcN6P) to form fructose 6-phosphate (Fru6P) and ammonium ion. In Histophilus somni (strain 129Pt) (Haemophilus somnus), this protein is Glucosamine-6-phosphate deaminase.